Consider the following 155-residue polypeptide: Myelin basic protein (155 aa).

Disordered stretches follow at residues 1-70 and 109-155; these read MASA…GRQT and TDGQ…PARR. At A2 the chain carries N-acetylalanine. Composition is skewed to basic and acidic residues over residues 37-49 and 123-134; these read GSRK…KEPA and KSKEAYRGRRDG.

Belongs to the myelin basic protein family.

The protein localises to the myelin membrane. Its function is as follows. This protein may function to maintain proper structure of myelin. The chain is Myelin basic protein (MBP) from Heterodontus francisci (Horn shark).